The sequence spans 484 residues: Mitochondrial metal transporter 2 (484 aa).

A mitochondrion-targeting transit peptide spans 1–56 (MLRISIDSIKQFGSFVPGYNNTSYHAAGRAIRTSSLYSTMISANPRRCLHSSKLLN). The segment covering 73–82 (SSQNGSNSRQ) has biased composition (polar residues). The tract at residues 73–114 (SSQNGSNSRQNESEGKKEGKASSVKSLLQHTHSHSHTHMHDN) is disordered. Positions 83 to 92 (NESEGKKEGK) are enriched in basic and acidic residues. Helical transmembrane passes span 132 to 152 (ITWI…VGGI), 158 to 178 (ALLA…LTLF), 209 to 229 (ILAM…VGPV), 256 to 276 (ATNV…EWVF), and 316 to 336 (YFFN…GLII). Positions 453–484 (DSKGDLEHSHDTKSTNHTHTHSDSADTHTHKH) are disordered.

It belongs to the cation diffusion facilitator (CDF) transporter (TC 2.A.4) family. SLC30A subfamily.

It localises to the mitochondrion membrane. Its function is as follows. Mitochondrial metal transporter involved in mitochondrial iron accumulation. The polypeptide is Mitochondrial metal transporter 2 (MMT2) (Saccharomyces cerevisiae (strain ATCC 204508 / S288c) (Baker's yeast)).